The primary structure comprises 227 residues: Cytochrome c oxidase subunit 2 (227 aa).

The Mitochondrial intermembrane portion of the chain corresponds to 1–14; it reads MAYPMQLGFQDATS. A helical membrane pass occupies residues 15–45; that stretch reads PIMEELLHFHDHTLMIVFLISSLVLYIISLM. At 46–59 the chain is on the mitochondrial matrix side; that stretch reads LTTKLTHTSTMDAQ. The chain crosses the membrane as a helical span at residues 60 to 87; the sequence is EVETVWTILPAIILILIALPSLRILYMM. Residues 88-227 lie on the Mitochondrial intermembrane side of the membrane; the sequence is DEINNPSLTV…HFEEWSASMS (140 aa). Positions 161, 196, 198, 200, 204, and 207 each coordinate Cu cation. Position 198 (glutamate 198) interacts with Mg(2+).

Belongs to the cytochrome c oxidase subunit 2 family. As to quaternary structure, component of the cytochrome c oxidase (complex IV, CIV), a multisubunit enzyme composed of 14 subunits. The complex is composed of a catalytic core of 3 subunits MT-CO1, MT-CO2 and MT-CO3, encoded in the mitochondrial DNA, and 11 supernumerary subunits COX4I, COX5A, COX5B, COX6A, COX6B, COX6C, COX7A, COX7B, COX7C, COX8 and NDUFA4, which are encoded in the nuclear genome. The complex exists as a monomer or a dimer and forms supercomplexes (SCs) in the inner mitochondrial membrane with NADH-ubiquinone oxidoreductase (complex I, CI) and ubiquinol-cytochrome c oxidoreductase (cytochrome b-c1 complex, complex III, CIII), resulting in different assemblies (supercomplex SCI(1)III(2)IV(1) and megacomplex MCI(2)III(2)IV(2)). Found in a complex with TMEM177, COA6, COX18, COX20, SCO1 and SCO2. Interacts with TMEM177 in a COX20-dependent manner. Interacts with COX20. Interacts with COX16. It depends on Cu cation as a cofactor.

It is found in the mitochondrion inner membrane. It carries out the reaction 4 Fe(II)-[cytochrome c] + O2 + 8 H(+)(in) = 4 Fe(III)-[cytochrome c] + 2 H2O + 4 H(+)(out). Functionally, component of the cytochrome c oxidase, the last enzyme in the mitochondrial electron transport chain which drives oxidative phosphorylation. The respiratory chain contains 3 multisubunit complexes succinate dehydrogenase (complex II, CII), ubiquinol-cytochrome c oxidoreductase (cytochrome b-c1 complex, complex III, CIII) and cytochrome c oxidase (complex IV, CIV), that cooperate to transfer electrons derived from NADH and succinate to molecular oxygen, creating an electrochemical gradient over the inner membrane that drives transmembrane transport and the ATP synthase. Cytochrome c oxidase is the component of the respiratory chain that catalyzes the reduction of oxygen to water. Electrons originating from reduced cytochrome c in the intermembrane space (IMS) are transferred via the dinuclear copper A center (CU(A)) of subunit 2 and heme A of subunit 1 to the active site in subunit 1, a binuclear center (BNC) formed by heme A3 and copper B (CU(B)). The BNC reduces molecular oxygen to 2 water molecules using 4 electrons from cytochrome c in the IMS and 4 protons from the mitochondrial matrix. This Antilocapra americana (Pronghorn) protein is Cytochrome c oxidase subunit 2 (MT-CO2).